Reading from the N-terminus, the 393-residue chain is Arginine biosynthesis bifunctional protein ArgJ (393 aa).

Residues Thr142, Lys168, Thr179, Glu265, Asn388, and Thr393 each coordinate substrate. The active-site Nucleophile is the Thr179.

This sequence belongs to the ArgJ family. In terms of assembly, heterotetramer of two alpha and two beta chains.

Its subcellular location is the cytoplasm. It catalyses the reaction N(2)-acetyl-L-ornithine + L-glutamate = N-acetyl-L-glutamate + L-ornithine. The catalysed reaction is L-glutamate + acetyl-CoA = N-acetyl-L-glutamate + CoA + H(+). It participates in amino-acid biosynthesis; L-arginine biosynthesis; L-ornithine and N-acetyl-L-glutamate from L-glutamate and N(2)-acetyl-L-ornithine (cyclic): step 1/1. Its pathway is amino-acid biosynthesis; L-arginine biosynthesis; N(2)-acetyl-L-ornithine from L-glutamate: step 1/4. In terms of biological role, catalyzes two activities which are involved in the cyclic version of arginine biosynthesis: the synthesis of N-acetylglutamate from glutamate and acetyl-CoA as the acetyl donor, and of ornithine by transacetylation between N(2)-acetylornithine and glutamate. This chain is Arginine biosynthesis bifunctional protein ArgJ, found in Geobacter sulfurreducens (strain ATCC 51573 / DSM 12127 / PCA).